A 1000-amino-acid chain; its full sequence is Chloride channel protein D (1000 aa).

Low complexity-rich tracts occupy residues 1-16 and 38-60; these read MSSG…NDGN and NNNN…NSSV. Residues 1 to 90 form a disordered region; it reads MSSGNPFDNG…SYDDDGDDEE (90 aa). The Cytoplasmic segment spans residues 1–256; sequence MSSGNPFDNG…LASDHEVLRW (256 aa). The segment covering 71 to 80 has biased composition (basic and acidic residues); that stretch reads RIQEEERLTE. The next 10 helical transmembrane spans lie at 257-277, 290-310, 416-436, 442-462, 493-513, 534-554, 678-698, 710-730, 733-753, and 772-792; these read IVSL…HACV, AVLE…NTLL, GAGA…LFSL, FWSI…TYTM, IIPF…FTWI, LEVF…PLFF, LGLW…AYTA, MLVI…HILG, VSID…GGVS, and YLLP…ALIH. CBS domains are found at residues 824-881 and 926-984; these read MAKK…ISDV and MNLT…YREL.

It belongs to the chloride channel (TC 2.A.49) family.

It localises to the membrane. Functionally, voltage-gated chloride channel. Chloride channels may have several functions including the regulation of cell volume, membrane potential stabilization and signal transduction. Required for normal aggregation. In Dictyostelium discoideum (Social amoeba), this protein is Chloride channel protein D (clcD).